Reading from the N-terminus, the 416-residue chain is Gamma-glutamyl phosphate reductase (416 aa).

It belongs to the gamma-glutamyl phosphate reductase family.

It is found in the cytoplasm. The enzyme catalyses L-glutamate 5-semialdehyde + phosphate + NADP(+) = L-glutamyl 5-phosphate + NADPH + H(+). The protein operates within amino-acid biosynthesis; L-proline biosynthesis; L-glutamate 5-semialdehyde from L-glutamate: step 2/2. Functionally, catalyzes the NADPH-dependent reduction of L-glutamate 5-phosphate into L-glutamate 5-semialdehyde and phosphate. The product spontaneously undergoes cyclization to form 1-pyrroline-5-carboxylate. In Salmonella arizonae (strain ATCC BAA-731 / CDC346-86 / RSK2980), this protein is Gamma-glutamyl phosphate reductase.